Consider the following 140-residue polypeptide: Transmembrane protein 107 (140 aa).

Transmembrane regions (helical) follow at residues 7-27 (LVPS…TIFW) and 53-73 (LIIA…GFLS). Residue N79 is glycosylated (N-linked (GlcNAc...) asparagine). 2 helical membrane-spanning segments follow: residues 84–104 (LLSV…LFEG) and 113–133 (IMSF…IAVF).

It localises to the membrane. Functionally, may play a role in cilia formation and embryonic patterning. The chain is Transmembrane protein 107 (tmem107) from Xenopus laevis (African clawed frog).